The chain runs to 242 residues: uncharacterized protein (242 aa).

This is an uncharacterized protein from Bacillus subtilis (strain 168).